A 205-amino-acid chain; its full sequence is High frequency lysogenization protein HflD homolog (205 aa).

This sequence belongs to the HflD family.

The protein resides in the cytoplasm. It is found in the cell inner membrane. This Shewanella baltica (strain OS223) protein is High frequency lysogenization protein HflD homolog.